Consider the following 54-residue polypeptide: Ovomucoid (54 aa).

The Kazal-like domain maps to 4–54; the sequence is VDCSDYPRPDCTLEYMPLCGSDNKTYGNKCNFCNAVVDSNGTLTLSHFGKC. Intrachain disulfides connect Cys-6–Cys-36, Cys-14–Cys-33, and Cys-22–Cys-54. Asn-43 carries an N-linked (GlcNAc...) asparagine glycan.

It localises to the secreted. This is Ovomucoid from Dendrocygna eytoni (Plumed whistling-duck).